The following is a 156-amino-acid chain: Cell division protein SepF (156 aa).

The segment at 17–44 (PETADYYEDQQPAQQAPAPVPTPAPTRS) is disordered.

The protein belongs to the SepF family. Homodimer. Interacts with FtsZ.

The protein localises to the cytoplasm. Functionally, cell division protein that is part of the divisome complex and is recruited early to the Z-ring. Probably stimulates Z-ring formation, perhaps through the cross-linking of FtsZ protofilaments. Its function overlaps with FtsA. The polypeptide is Cell division protein SepF (Limosilactobacillus fermentum (strain NBRC 3956 / LMG 18251) (Lactobacillus fermentum)).